A 659-amino-acid chain; its full sequence is Interferon-induced GTP-binding protein Mx3 (659 aa).

Residues 65 to 338 (DLALPAIAVI…LISHICKSLP (274 aa)) form the Dynamin-type G domain. The tract at residues 75–82 (GDQSSGKS) is G1 motif. 75–82 (GDQSSGKS) contacts GTP. Residues 100 to 102 (VTR) form a G2 motif region. The segment at 176–179 (DLPG) is G3 motif. GTP contacts are provided by residues 176 to 180 (DLPGI) and 245 to 248 (TKPD). The segment at 245–248 (TKPD) is G4 motif. A G5 motif region spans residues 277–280 (KCRG). The disordered stretch occupies residues 547-568 (EAEEEERKHGKSRSAQSPNLQT). A compositionally biased stretch (polar residues) spans 559 to 568 (RSAQSPNLQT). One can recognise a GED domain in the interval 571–659 (MDEIFQHLNA…AQRRLAKFPG (89 aa)).

Belongs to the TRAFAC class dynamin-like GTPase superfamily. Dynamin/Fzo/YdjA family.

The protein localises to the cytoplasm. Does not show activity against influenza virus or VSV; although it only differs from Mx2 by 8 positions. This is Interferon-induced GTP-binding protein Mx3 (Mx3) from Rattus norvegicus (Rat).